A 948-amino-acid polypeptide reads, in one-letter code: Valine--tRNA ligase (948 aa).

The 'HIGH' region signature appears at 40-50 (PNVTGSLHMGH). The 'KMSKS' region motif lies at 551–555 (KMSKS). K554 is an ATP binding site. Positions 879 to 945 (LIDKGAELAR…GKLAEQHARI (67 aa)) form a coiled coil.

The protein belongs to the class-I aminoacyl-tRNA synthetase family. ValS type 1 subfamily. In terms of assembly, monomer.

It localises to the cytoplasm. The catalysed reaction is tRNA(Val) + L-valine + ATP = L-valyl-tRNA(Val) + AMP + diphosphate. Its function is as follows. Catalyzes the attachment of valine to tRNA(Val). As ValRS can inadvertently accommodate and process structurally similar amino acids such as threonine, to avoid such errors, it has a 'posttransfer' editing activity that hydrolyzes mischarged Thr-tRNA(Val) in a tRNA-dependent manner. The protein is Valine--tRNA ligase of Pseudomonas syringae pv. syringae (strain B728a).